The sequence spans 584 residues: MFS-type transporter gkaD (584 aa).

The segment covering 1-11 (MAVDTETTTTT) has biased composition (low complexity). The segment at 1–60 (MAVDTETTTTTIPVTDSDRIDDQNNLTSNAIPHASEKTVPDSPASEQNEVSDESEDKPSK) is disordered. An N-linked (GlcNAc...) asparagine glycan is attached at N25. 8 helical membrane-spanning segments follow: residues 65-85 (FGFY…SLEA), 99-119 (LGGA…QTAF), 134-154 (WPMI…GGSK), 167-187 (GIGS…LLPL), 196-216 (MIVS…GLIV), 223-243 (WVFY…FFFL), 262-282 (WIGN…LSWA), and 293-313 (VVVP…YEGS). The N-linked (GlcNAc...) asparagine glycan is linked to N328. 6 consecutive transmembrane segments (helical) span residues 334–354 (AFAV…FLPV), 369–389 (VQLL…GTLL), 398–418 (LQHG…LLDA), 425–445 (WVGY…VLLP), 462–482 (TWSF…TAVF), and 536–556 (LNVV…LVFL).

This sequence belongs to the major facilitator superfamily.

The protein resides in the membrane. In terms of biological role, MFS-type transporter; part of the gene cluster that mediates the biosynthesis of GKK1032, fungal natural products containing a macrocyclic para-cyclophane connected to a decahydrofluorene ring system that show potent antitumor activities. This Penicillium citrinum protein is MFS-type transporter gkaD.